Reading from the N-terminus, the 156-residue chain is MPRKGSVPKREVLPDPIYGSKVISKLINGIMLDGKKGVAQKIVYDALALINERTGEDALEVFEKAMNNIMPVLEVKARRVGGANYQVPVEVRSDRRQTLGIRWLVNYTRARGEKGMVEKLAKEIIDASNSTGATVKKKEDTHKMAEANKAFAHYRW.

This sequence belongs to the universal ribosomal protein uS7 family. As to quaternary structure, part of the 30S ribosomal subunit. Contacts proteins S9 and S11.

Its function is as follows. One of the primary rRNA binding proteins, it binds directly to 16S rRNA where it nucleates assembly of the head domain of the 30S subunit. Is located at the subunit interface close to the decoding center, probably blocks exit of the E-site tRNA. The protein is Small ribosomal subunit protein uS7 of Alkaliphilus oremlandii (strain OhILAs) (Clostridium oremlandii (strain OhILAs)).